A 155-amino-acid chain; its full sequence is UPF0735 ACT domain-containing protein CA_C1234 (155 aa).

In terms of domain architecture, ACT spans 79–154 (TISILIEHRR…NVLKVEIVAM (76 aa)).

The protein belongs to the UPF0735 family.

In Clostridium acetobutylicum (strain ATCC 824 / DSM 792 / JCM 1419 / IAM 19013 / LMG 5710 / NBRC 13948 / NRRL B-527 / VKM B-1787 / 2291 / W), this protein is UPF0735 ACT domain-containing protein CA_C1234.